A 125-amino-acid polypeptide reads, in one-letter code: Large ribosomal subunit protein bL17 (125 aa).

The protein belongs to the bacterial ribosomal protein bL17 family. In terms of assembly, part of the 50S ribosomal subunit. Contacts protein L32.

This Syntrophus aciditrophicus (strain SB) protein is Large ribosomal subunit protein bL17.